The chain runs to 788 residues: Bifunctional purine biosynthetic protein ADE1 (788 aa).

The segment at 1 to 429 is GARS; that stretch reads MSLRILLVGN…NRKDIAYKAF (429 aa). An ATP-grasp domain is found at 114-323; the sequence is KDFMKKHNIP…LAEVMLACVE (210 aa). Residue 140–201 participates in ATP binding; that stretch reads VKKVGHRVVI…EEFLEGDELS (62 aa). E291 and N293 together coordinate Mg(2+). The segment at 439–752 is AIRS; sequence ITYAQAGVSI…VVKQEKVAEV (314 aa).

The protein in the N-terminal section; belongs to the GARS family. In the C-terminal section; belongs to the AIR synthase family. Requires Mg(2+) as cofactor. It depends on Mn(2+) as a cofactor.

The protein resides in the cytoplasm. The protein localises to the cytosol. It carries out the reaction 5-phospho-beta-D-ribosylamine + glycine + ATP = N(1)-(5-phospho-beta-D-ribosyl)glycinamide + ADP + phosphate + H(+). The enzyme catalyses 2-formamido-N(1)-(5-O-phospho-beta-D-ribosyl)acetamidine + ATP = 5-amino-1-(5-phospho-beta-D-ribosyl)imidazole + ADP + phosphate + H(+). It participates in purine metabolism; IMP biosynthesis via de novo pathway; 5-amino-1-(5-phospho-D-ribosyl)imidazole from N(2)-formyl-N(1)-(5-phospho-D-ribosyl)glycinamide: step 2/2. Its pathway is purine metabolism; IMP biosynthesis via de novo pathway; N(1)-(5-phospho-D-ribosyl)glycinamide from 5-phospho-alpha-D-ribose 1-diphosphate: step 2/2. Functionally, catalyzes the second and fifth step in the 'de novo' purine biosynthesis pathway; contains phosphoribosylamine--glycine ligase (GARS) and phosphoribosylformylglycinamidine cyclo-ligase (AIRS) activities. The sequence is that of Bifunctional purine biosynthetic protein ADE1 from Yarrowia lipolytica (strain CLIB 122 / E 150) (Yeast).